The following is a 58-amino-acid chain: Protein YecU (58 aa).

The protein is Protein YecU of Escherichia coli (strain K12).